We begin with the raw amino-acid sequence, 406 residues long: L-carnitine CoA-transferase (406 aa).

The CoA site is built by K98 and R105. The Nucleophile role is filled by D170.

Belongs to the CoA-transferase III family. CaiB subfamily. Homodimer.

It is found in the cytoplasm. It carries out the reaction crotonobetainyl-CoA + (R)-carnitine = crotonobetaine + (R)-carnitinyl-CoA. The catalysed reaction is 4-(trimethylamino)butanoyl-CoA + (R)-carnitine = (R)-carnitinyl-CoA + 4-(trimethylamino)butanoate. The protein operates within amine and polyamine metabolism; carnitine metabolism. Functionally, catalyzes the reversible transfer of the CoA moiety from gamma-butyrobetainyl-CoA to L-carnitine to generate L-carnitinyl-CoA and gamma-butyrobetaine. Is also able to catalyze the reversible transfer of the CoA moiety from gamma-butyrobetainyl-CoA or L-carnitinyl-CoA to crotonobetaine to generate crotonobetainyl-CoA. This is L-carnitine CoA-transferase from Proteus mirabilis (strain HI4320).